The sequence spans 386 residues: GTPase Obg (386 aa).

Residues 1–159 enclose the Obg domain; that stretch reads MKFIDEARIE…RTLKLELKVL (159 aa). Residues 160–348 enclose the OBG-type G domain; sequence ADVGLLGMPN…LTFAIMSYLD (189 aa). GTP is bound by residues 166 to 173, 191 to 195, 213 to 216, 284 to 287, and 329 to 331; these read GMPNAGKS, FTTLH, DIPG, NKVD, and SAL. Mg(2+)-binding residues include serine 173 and threonine 193.

This sequence belongs to the TRAFAC class OBG-HflX-like GTPase superfamily. OBG GTPase family. Monomer. Requires Mg(2+) as cofactor.

It is found in the cytoplasm. Its function is as follows. An essential GTPase which binds GTP, GDP and possibly (p)ppGpp with moderate affinity, with high nucleotide exchange rates and a fairly low GTP hydrolysis rate. Plays a role in control of the cell cycle, stress response, ribosome biogenesis and in those bacteria that undergo differentiation, in morphogenesis control. This is GTPase Obg from Chromobacterium violaceum (strain ATCC 12472 / DSM 30191 / JCM 1249 / CCUG 213 / NBRC 12614 / NCIMB 9131 / NCTC 9757 / MK).